The primary structure comprises 2094 residues: Protein Ycf2 (2094 aa).

1385 to 1392 (GPPETGRS) provides a ligand contact to ATP.

This sequence belongs to the Ycf2 family.

It localises to the plastid. Its subcellular location is the chloroplast stroma. Functionally, probable ATPase of unknown function. Its presence in a non-photosynthetic plant (Epifagus virginiana) and experiments in tobacco indicate that it has an essential function which is probably not related to photosynthesis. The sequence is that of Protein Ycf2 from Huperzia lucidula (Shining clubmoss).